Reading from the N-terminus, the 142-residue chain is Alpha-lactalbumin (142 aa).

The signal sequence occupies residues Met-1–Ala-19. One can recognise a C-type lysozyme domain in the interval Glu-20–Leu-142. Intrachain disulfides connect Cys-25/Cys-139, Cys-47/Cys-130, Cys-80/Cys-96, and Cys-92/Cys-110. 2 N-linked (GlcNAc...) asparagine glycosylation sites follow: Asn-64 and Asn-93. Lys-98, Asp-101, Asp-103, Asp-106, and Asp-107 together coordinate Ca(2+).

The protein belongs to the glycosyl hydrolase 22 family. As to quaternary structure, lactose synthase (LS) is a heterodimer of a catalytic component, beta1,4-galactosyltransferase (beta4Gal-T1) and a regulatory component, alpha-lactalbumin (LA). As to expression, mammary gland specific. Secreted in milk.

It localises to the secreted. Its function is as follows. Regulatory subunit of lactose synthase, changes the substrate specificity of galactosyltransferase in the mammary gland making glucose a good acceptor substrate for this enzyme. This enables LS to synthesize lactose, the major carbohydrate component of milk. In other tissues, galactosyltransferase transfers galactose onto the N-acetylglucosamine of the oligosaccharide chains in glycoproteins. This is Alpha-lactalbumin (LALBA) from Bos mutus grunniens (Wild yak).